The chain runs to 793 residues: Phenylalanine--tRNA ligase beta subunit (793 aa).

In terms of domain architecture, tRNA-binding spans 40–159; the sequence is SKLNTKLVIG…MDEMVGREIS (120 aa). The B5 domain occupies 401–476; it reads NYDNVYSITL…RLYGYDNIIE (76 aa). The Mg(2+) site is built by D454, D460, E463, and E464. In terms of domain architecture, FDX-ACB spans 701-793; sequence SKFQKSTRDI…NLKELKVKVR (93 aa).

The protein belongs to the phenylalanyl-tRNA synthetase beta subunit family. Type 1 subfamily. As to quaternary structure, tetramer of two alpha and two beta subunits. Requires Mg(2+) as cofactor.

The protein resides in the cytoplasm. It catalyses the reaction tRNA(Phe) + L-phenylalanine + ATP = L-phenylalanyl-tRNA(Phe) + AMP + diphosphate + H(+). The chain is Phenylalanine--tRNA ligase beta subunit from Mesoplasma florum (strain ATCC 33453 / NBRC 100688 / NCTC 11704 / L1) (Acholeplasma florum).